A 57-amino-acid chain; its full sequence is MAVPFRRTSKTRKRKRRTHYKLAVPGMVKCPECGEMKLAHRVCKECGSYKGQDVLSK.

It belongs to the bacterial ribosomal protein bL32 family.

In Halalkalibacterium halodurans (strain ATCC BAA-125 / DSM 18197 / FERM 7344 / JCM 9153 / C-125) (Bacillus halodurans), this protein is Large ribosomal subunit protein bL32 (rpmF).